Consider the following 306-residue polypeptide: 4-diphosphocytidyl-2-C-methyl-D-erythritol kinase (306 aa).

Residue Lys11 is part of the active site. 98–108 (PIAGGMGGGSA) provides a ligand contact to ATP. The active site involves Asp140.

Belongs to the GHMP kinase family. IspE subfamily.

The catalysed reaction is 4-CDP-2-C-methyl-D-erythritol + ATP = 4-CDP-2-C-methyl-D-erythritol 2-phosphate + ADP + H(+). The protein operates within isoprenoid biosynthesis; isopentenyl diphosphate biosynthesis via DXP pathway; isopentenyl diphosphate from 1-deoxy-D-xylulose 5-phosphate: step 3/6. Its function is as follows. Catalyzes the phosphorylation of the position 2 hydroxy group of 4-diphosphocytidyl-2C-methyl-D-erythritol. The chain is 4-diphosphocytidyl-2-C-methyl-D-erythritol kinase from Leifsonia xyli subsp. xyli (strain CTCB07).